The sequence spans 232 residues: YlmG homolog protein 1-1, chloroplastic (232 aa).

The N-terminal 16 residues, 1–16 (MAAITALTLRSPVYLP), are a transit peptide targeting the chloroplast. Transmembrane regions (helical) follow at residues 147–167 (LTVV…VLMV) and 201–221 (IIPP…AVLG).

This sequence belongs to the YggT family.

The protein localises to the plastid. Its subcellular location is the chloroplast thylakoid membrane. Its function is as follows. Required for the proper distribution of nucleoids in chloroplasts. The nucleoid partitioning by YLMG1-1 may be related to chloroplast division processes. This is YlmG homolog protein 1-1, chloroplastic from Arabidopsis thaliana (Mouse-ear cress).